We begin with the raw amino-acid sequence, 780 residues long: Chloride channel protein CLC-b (780 aa).

The disordered stretch occupies residues 1–28 (MVEEDLNQIGGNSNYNGEGGDPESNTLN). 12 helical membrane-spanning segments follow: residues 87 to 107 (TLAC…NLAV), 130 to 150 (GLMV…VLCV), 177 to 197 (FGAT…AAGL), 205 to 225 (LVHI…DNHR), 247 to 267 (GSAA…LFAL), 277 to 297 (ALLW…REFI), 327 to 347 (VTDI…GSLY), 370 to 390 (VLLS…LPFL), 452 to 472 (MGSL…TFGI), 477 to 497 (GLFL…GAAM), 509 to 529 (AVLG…SLCV), and 530 to 550 (IFLE…VLLI). CBS domains are found at residues 594–663 (AKPP…FLTE) and 708–770 (TNTT…AFPL). A helical membrane pass occupies residues 735 to 755 (HLLIVPKIQASGMCPVVGILT).

It belongs to the chloride channel (TC 2.A.49) family. Homodimer. Interacts with PP2A5. As to expression, broadly expressed in the plant.

It localises to the membrane. Voltage-gated chloride channel. The polypeptide is Chloride channel protein CLC-b (CLC-B) (Arabidopsis thaliana (Mouse-ear cress)).